Here is a 175-residue protein sequence, read N- to C-terminus: Protein OPG036 (175 aa).

The protein belongs to the poxviridae OPG036 family.

The protein localises to the host nucleus. Functionally, plays a role in the inhibition of host innate immune response. Within the host nucleus, inhibits activation of interferon-beta promoter by inhibiting IRF3 activation. This Homo sapiens (Human) protein is Protein OPG036 (OPG036).